The chain runs to 472 residues: ATP-dependent rRNA helicase rrp3 (472 aa).

The segment at 1–52 (MRDVKKRKIAHEAPEHGSDTESTSSHKSVAQQDDPLETQDEATATESRPAPK) is disordered. The span at 10–19 (AHEAPEHGSD) shows a compositional bias: basic and acidic residues. Positions 20-31 (TESTSSHKSVAQ) are enriched in polar residues. Positions 52 to 80 (KSFKDLGIIDQLCEACETMGYKAPTPIQA) match the Q motif motif. In terms of domain architecture, Helicase ATP-binding spans 83–254 (IPLALQGRDL…RASLSNPLRV (172 aa)). 96–103 (AETGSGKT) serves as a coordination point for ATP. The DEAD box signature appears at 202-205 (DEAD). The Helicase C-terminal domain occupies 282 to 426 (YLVYLLNEFV…EYELEKDEVM (145 aa)). Residues 444 to 472 (KNFDEKRGTKAKKFGKGKRSRDEMDQEEG) form a disordered region. The span at 452–462 (TKAKKFGKGKR) shows a compositional bias: basic residues.

It belongs to the DEAD box helicase family. DDX47/RRP3 subfamily. In terms of assembly, interacts with the SSU processome.

The protein localises to the nucleus. The enzyme catalyses ATP + H2O = ADP + phosphate + H(+). In terms of biological role, ATP-dependent rRNA helicase required for pre-ribosomal RNA processing. Involved in the maturation of the 35S-pre-rRNA and to its cleavage to mature 18S rRNA. The sequence is that of ATP-dependent rRNA helicase rrp3 from Aspergillus fumigatus (strain ATCC MYA-4609 / CBS 101355 / FGSC A1100 / Af293) (Neosartorya fumigata).